Reading from the N-terminus, the 284-residue chain is Bifunctional protein FolD (284 aa).

Residues 166–168 (GAS), Ser191, and Ile232 each bind NADP(+).

This sequence belongs to the tetrahydrofolate dehydrogenase/cyclohydrolase family. As to quaternary structure, homodimer.

The catalysed reaction is (6R)-5,10-methylene-5,6,7,8-tetrahydrofolate + NADP(+) = (6R)-5,10-methenyltetrahydrofolate + NADPH. It catalyses the reaction (6R)-5,10-methenyltetrahydrofolate + H2O = (6R)-10-formyltetrahydrofolate + H(+). It functions in the pathway one-carbon metabolism; tetrahydrofolate interconversion. Its function is as follows. Catalyzes the oxidation of 5,10-methylenetetrahydrofolate to 5,10-methenyltetrahydrofolate and then the hydrolysis of 5,10-methenyltetrahydrofolate to 10-formyltetrahydrofolate. This chain is Bifunctional protein FolD, found in Neisseria gonorrhoeae (strain ATCC 700825 / FA 1090).